The sequence spans 777 residues: Homoaconitase, mitochondrial (777 aa).

A mitochondrion-targeting transit peptide spans 1-35 (MFKRTGSLLLRCRASRVPVIGRPLISLSTSSTSLS). The disordered stretch occupies residues 47-74 (LRRYTEASSSTTQTSPSSSSWPAPDAAP). The span at 52–74 (EASSSTTQTSPSSSSWPAPDAAP) shows a compositional bias: low complexity. Positions 398, 466, and 469 each coordinate [4Fe-4S] cluster.

The protein belongs to the aconitase/IPM isomerase family. [4Fe-4S] cluster serves as cofactor.

It localises to the mitochondrion. It carries out the reaction (2R,3S)-homoisocitrate = cis-homoaconitate + H2O. The protein operates within amino-acid biosynthesis; L-lysine biosynthesis via AAA pathway; L-alpha-aminoadipate from 2-oxoglutarate: step 3/5. Its function is as follows. Catalyzes the reversible hydration of cis-homoaconitate to (2R,3S)-homoisocitrate, a step in the alpha-aminoadipate pathway for lysine biosynthesis. This Aspergillus fumigatus (strain ATCC MYA-4609 / CBS 101355 / FGSC A1100 / Af293) (Neosartorya fumigata) protein is Homoaconitase, mitochondrial (lys4).